The chain runs to 248 residues: 2,3-bisphosphoglycerate-dependent phosphoglycerate mutase (248 aa).

Residues 10–17 (RHGQSQWN), 23–24 (TG), arginine 62, 89–92 (ERHY), lysine 100, 116–117 (RR), and 183–184 (GN) contribute to the substrate site. Histidine 11 functions as the Tele-phosphohistidine intermediate in the catalytic mechanism. The active-site Proton donor/acceptor is the glutamate 89.

This sequence belongs to the phosphoglycerate mutase family. BPG-dependent PGAM subfamily.

The catalysed reaction is (2R)-2-phosphoglycerate = (2R)-3-phosphoglycerate. Its pathway is carbohydrate degradation; glycolysis; pyruvate from D-glyceraldehyde 3-phosphate: step 3/5. Functionally, catalyzes the interconversion of 2-phosphoglycerate and 3-phosphoglycerate. This Corynebacterium kroppenstedtii (strain DSM 44385 / JCM 11950 / CIP 105744 / CCUG 35717) protein is 2,3-bisphosphoglycerate-dependent phosphoglycerate mutase.